A 261-amino-acid polypeptide reads, in one-letter code: uncharacterized protein (261 aa).

The span at 1-12 shows a compositional bias: polar residues; that stretch reads MSRTSSQNQEII. Positions 1–139 are disordered; it reads MSRTSSQNQE…KELDTINKKT (139 aa). Over residues 23–55 the composition is skewed to low complexity; sequence SSKPSKSSKPSKSSKPSKSSKTSKSSRSSGSKS. Residues 65 to 74 are compositionally biased toward basic and acidic residues; it reads SRKDKYKEEY. The segment covering 79-108 has biased composition (acidic residues); sequence YPDEQEYEQEYEQEYEQEYQDNGEQTEEFV. Positions 122–139 are enriched in basic and acidic residues; sequence DERQTQSNKELDTINKKT. Coiled-coil stretches lie at residues 151–181 and 218–243; these read MDHDDNIKRLNAKMKAFKDAKKQEEESIIKL and EDIIRDALMEVVRNERKVAELVKKIE.

This is an uncharacterized protein from Acanthamoeba polyphaga (Amoeba).